The primary structure comprises 200 residues: DNA-directed RNA polymerase subunit 7-like protein (200 aa).

It belongs to the eukaryotic RPB7/RPC8 RNA polymerase subunit family.

It is found in the nucleus. This Arabidopsis thaliana (Mouse-ear cress) protein is DNA-directed RNA polymerase subunit 7-like protein (NRPB7L).